Reading from the N-terminus, the 252-residue chain is Cysteine-rich repeat secretory protein 38 (252 aa).

Residues 1 to 27 (MSSLKRIVWFPILAIAIQILSIHTVLS) form the signal peptide. 2 Gnk2-homologous domains span residues 34-136 (FLFH…STNF) and 142-248 (FENR…IYPF).

The protein belongs to the cysteine-rich repeat secretory protein family.

The protein resides in the secreted. The chain is Cysteine-rich repeat secretory protein 38 (CRRSP38) from Arabidopsis thaliana (Mouse-ear cress).